Consider the following 332-residue polypeptide: MPIEFEQTFRNFLMEHQEKYNRTYHFLILMDSIITAAQRIELYYRTGALKGNLGMAGSINVQGESVMKMDDIANEIVLHYLAASNRVIQVVSEESDDIVDMNKDGGRYFVYFDPLDGSSNVAHGLPVGFLFGIAKRNLDGNMKGPEDFHLREGNDYIAAGMFVIPTGMFTLALRDAGCWRFHADETATYVKPMRMTLPDDPKKWELSFNSANTTVFSEKVQSWIQVNISKYKFRYIGALAGDFHRLLTNGGLFMYPAIVKHPDPKENRPQGKLRLLYEANVVAFMCREAGGDAIDETGTRIMEIKPAGHHQRTTLYVGSKPIIDELASLFKS.

4 residues coordinate Mg(2+): glutamate 93, aspartate 113, leucine 115, and aspartate 116. Residues 116 to 119 (DGSS), asparagine 209, tyrosine 235, and lysine 272 each bind substrate. Glutamate 278 serves as a coordination point for Mg(2+).

The protein belongs to the FBPase class 1 family. Homotetramer. Requires Mg(2+) as cofactor.

It is found in the cytoplasm. The catalysed reaction is beta-D-fructose 1,6-bisphosphate + H2O = beta-D-fructose 6-phosphate + phosphate. The protein operates within carbohydrate biosynthesis; gluconeogenesis. The sequence is that of Fructose-1,6-bisphosphatase class 1 from Syntrophus aciditrophicus (strain SB).